A 246-amino-acid chain; its full sequence is Sulfate transporter CysZ (246 aa).

Helical transmembrane passes span 24-44, 69-89, 148-168, and 214-234; these read LFVLIPLTLNLLVFALLIGFA, IVWPLFVLLVLVIVFFTFTMV, LLVLSFVPGVNLIATPLWILF, and LLIPLVNLVMMPAAVAGATLF.

It belongs to the CysZ family.

It localises to the cell inner membrane. Functionally, high affinity, high specificity proton-dependent sulfate transporter, which mediates sulfate uptake. Provides the sulfur source for the cysteine synthesis pathway. In Pseudomonas aeruginosa (strain LESB58), this protein is Sulfate transporter CysZ.